The primary structure comprises 591 residues: Vomeromodulin (591 aa).

A signal peptide spans 1-18 (MWVLQALAIMLSIQAGTL). Positions 151–172 (NEGNGDSSKPSSGSKATGGLGQ) are disordered. N-linked (GlcNAc...) asparagine glycosylation is found at Asn-421 and Asn-516.

In terms of processing, N-glycosylated. The N-glycans consist mainly of complex sialylated and fucosylated biantennary structures. In terms of tissue distribution, expressed in lung. Not detected in other tissues tested (at protein level).

It is found in the secreted. The sequence is that of Vomeromodulin from Mus musculus (Mouse).